Reading from the N-terminus, the 512-residue chain is MQLNPSEISDLIKSRIQNLQLAATSRNEGTVVSVTDGITRVHGLADVMQGEMLEFPGNTFGLALNLERDSVGAVVLGEYEHITEGDPVKATGRILEVPVGPELIGRVVNALGQPIDGKGPINAKLTDKIEKVAPGVIWRQSVSQPVQTGLKSVDAMVPIGRGQRELIIGDRQTGKTAVAVDAIINQKGQDMFCVYVAIGQKASTIANVVRKLEEHGAMEYTIVVAATASESAAMQFIAPYSGCTMGEYFRDRGQDALIIYDDLTKQAWAYRQISLLLRRPPGREAYPGDVFYLHSRLLERASRVSADHVEKFTNGEVKGKTGSLTALPIIETQAGDVSAFVPTNVISITDGQIFLDTDLFNAGIRPAINAGISVSRVGGAAQTKVIKKLSGGIRTDLAQYRELAAFAQFASDLDDATRKQLERGRRVTELMKQPQYAPLSVADMAITLYAVNNGYFDDVEVPRLLAFESGLQQYVKAKNPALVTKIMTSKELDADGEKQLVAVIDEFKKSWA.

Position 169–176 (169–176) interacts with ATP; that stretch reads GDRQTGKT.

This sequence belongs to the ATPase alpha/beta chains family. F-type ATPases have 2 components, CF(1) - the catalytic core - and CF(0) - the membrane proton channel. CF(1) has five subunits: alpha(3), beta(3), gamma(1), delta(1), epsilon(1). CF(0) has three main subunits: a(1), b(2) and c(9-12). The alpha and beta chains form an alternating ring which encloses part of the gamma chain. CF(1) is attached to CF(0) by a central stalk formed by the gamma and epsilon chains, while a peripheral stalk is formed by the delta and b chains.

The protein localises to the cell inner membrane. It catalyses the reaction ATP + H2O + 4 H(+)(in) = ADP + phosphate + 5 H(+)(out). Produces ATP from ADP in the presence of a proton gradient across the membrane. The alpha chain is a regulatory subunit. This Aromatoleum aromaticum (strain DSM 19018 / LMG 30748 / EbN1) (Azoarcus sp. (strain EbN1)) protein is ATP synthase subunit alpha.